Reading from the N-terminus, the 340-residue chain is Anthranilate phosphoribosyltransferase (340 aa).

5-phospho-alpha-D-ribose 1-diphosphate-binding positions include Gly-82, 85-86, Thr-90, 92-95, 110-118, and Ala-122; these read GD, NISS, and KHGGRSVSS. An anthranilate-binding site is contributed by Gly-82. Ser-94 contributes to the Mg(2+) binding site. Arg-168 lines the anthranilate pocket. The Mg(2+) site is built by Asp-227 and Glu-228.

Belongs to the anthranilate phosphoribosyltransferase family. As to quaternary structure, homodimer. Requires Mg(2+) as cofactor.

It carries out the reaction N-(5-phospho-beta-D-ribosyl)anthranilate + diphosphate = 5-phospho-alpha-D-ribose 1-diphosphate + anthranilate. Its pathway is amino-acid biosynthesis; L-tryptophan biosynthesis; L-tryptophan from chorismate: step 2/5. Functionally, catalyzes the transfer of the phosphoribosyl group of 5-phosphorylribose-1-pyrophosphate (PRPP) to anthranilate to yield N-(5'-phosphoribosyl)-anthranilate (PRA). This is Anthranilate phosphoribosyltransferase from Dechloromonas aromatica (strain RCB).